Consider the following 884-residue polypeptide: Valine--tRNA ligase (884 aa).

A 'HIGH' region motif is present at residues Pro43 to His53. The 'KMSKS' region signature appears at Lys530–Ser534. Position 533 (Lys533) interacts with ATP. A coiled-coil region spans residues Val817 to Met884.

This sequence belongs to the class-I aminoacyl-tRNA synthetase family. ValS type 1 subfamily. In terms of assembly, monomer.

It localises to the cytoplasm. The enzyme catalyses tRNA(Val) + L-valine + ATP = L-valyl-tRNA(Val) + AMP + diphosphate. In terms of biological role, catalyzes the attachment of valine to tRNA(Val). As ValRS can inadvertently accommodate and process structurally similar amino acids such as threonine, to avoid such errors, it has a 'posttransfer' editing activity that hydrolyzes mischarged Thr-tRNA(Val) in a tRNA-dependent manner. This chain is Valine--tRNA ligase, found in Zymomonas mobilis subsp. mobilis (strain ATCC 31821 / ZM4 / CP4).